The following is a 93-amino-acid chain: Phosphoribosyl-ATP pyrophosphatase (93 aa).

It belongs to the PRA-PH family.

Its subcellular location is the cytoplasm. It catalyses the reaction 1-(5-phospho-beta-D-ribosyl)-ATP + H2O = 1-(5-phospho-beta-D-ribosyl)-5'-AMP + diphosphate + H(+). It functions in the pathway amino-acid biosynthesis; L-histidine biosynthesis; L-histidine from 5-phospho-alpha-D-ribose 1-diphosphate: step 2/9. The sequence is that of Phosphoribosyl-ATP pyrophosphatase from Mycolicibacterium paratuberculosis (strain ATCC BAA-968 / K-10) (Mycobacterium paratuberculosis).